Here is a 162-residue protein sequence, read N- to C-terminus: Selenoprotein F (162 aa).

Positions 1–28 (MAARRDGWLGPAFGLRLLLATVLQTVSA) are cleaved as a signal peptide. Sec-93 is a non-standard amino acid (selenocysteine).

It belongs to the selenoprotein M/F family. Forms a tight complex with UGGT1/UGCGL1. Interacts with UGGT2/UGCGL2. Interacts with RDH11.

It is found in the endoplasmic reticulum lumen. Functionally, may be involved in redox reactions associated with the formation of disulfide bonds. May contribute to the quality control of protein folding in the endoplasmic reticulum. May regulate protein folding by enhancing the catalytic activity of UGGT1/UGCGL1 and UGGT2/UGCGL2. The polypeptide is Selenoprotein F (Bos taurus (Bovine)).